Consider the following 453-residue polypeptide: Aminodeoxychorismate synthase component 1 (453 aa).

Residues serine 36, 43-46 (YSRF), and 240-242 (PFS) each bind L-tryptophan. Catalysis depends on glutamate 258, which acts as the Proton donor. Lysine 274 serves as the catalytic N6-(4-deoxychorismate)-lysine intermediate.

Belongs to the anthranilate synthase component I family. As to quaternary structure, monomer. Heterodimer consisting of two non-identical subunits: a glutamine amidotransferase subunit (PabA) and a aminodeoxychorismate synthase subunit (PabB). Mg(2+) serves as cofactor.

The catalysed reaction is chorismate + L-glutamine = 4-amino-4-deoxychorismate + L-glutamate. It functions in the pathway cofactor biosynthesis; tetrahydrofolate biosynthesis; 4-aminobenzoate from chorismate: step 1/2. Inhibited by 6-diazo-5-oxo-L-norleucine (DON). The inhibition is competitive with glutamine but uncompetitive with chorismate. Also inhibited by 2-fluorochorismate. Functionally, part of a heterodimeric complex that catalyzes the two-step biosynthesis of 4-amino-4-deoxychorismate (ADC), a precursor of p-aminobenzoate (PABA) and tetrahydrofolate. In the first step, a glutamine amidotransferase (PabA) generates ammonia as a substrate that, along with chorismate, is used in the second step, catalyzed by aminodeoxychorismate synthase (PabB) to produce ADC. PabB, in the absence of PabA, can catalyze the formation of ADC in the presence of exogenous ammonia. This chain is Aminodeoxychorismate synthase component 1 (pabB), found in Escherichia coli (strain K12).